The following is a 363-amino-acid chain: Apelin receptor B (363 aa).

Residues 1 to 38 lie on the Extracellular side of the membrane; that stretch reads MESEGFSATTEQYEYYDYANETGLQPCDETDWDFSYSL. N-linked (GlcNAc...) asparagine glycosylation occurs at asparagine 20. Cystine bridges form between cysteine 27/cysteine 287 and cysteine 109/cysteine 186. Residues 39–59 traverse the membrane as a helical segment; that stretch reads LPVFYMIVFVLGLSGNGVVIF. The Cytoplasmic portion of the chain corresponds to 60-77; sequence TVWKAKPKRRSADTYIGN. The helical transmembrane segment at 78-98 threads the bilayer; that stretch reads LALADLAFVVTLPLWATYTAL. At 99–111 the chain is on the extracellular side; sequence GFHWPFGSALCKL. The chain crosses the membrane as a helical span at residues 112 to 132; sequence SSYLVLLNMFASVFCLTCLSF. The Cytoplasmic portion of the chain corresponds to 133-152; that stretch reads DRYLAIVHSLSSAKLRSRSS. The chain crosses the membrane as a helical span at residues 153–173; sequence ILVSLAVIWLFSGLLALPSLI. At 174-200 the chain is on the extracellular side; that stretch reads LRDTRVEGNNTICDLDFSGVSSKENEN. N-linked (GlcNAc...) asparagine glycosylation is present at asparagine 182. A helical transmembrane segment spans residues 201 to 221; the sequence is FWIGGLSILTTVPGFLLPLLL. Residues 222–249 lie on the Cytoplasmic side of the membrane; the sequence is MTIFYCFIGGKVTMHFQNLKKEEQKKKR. A helical transmembrane segment spans residues 250–270; sequence LLKIIITLVVVFAICWLPFHI. The Extracellular segment spans residues 271-297; sequence LKTIHFLDLMGFLELSCSAQNIIVSLH. The chain crosses the membrane as a helical span at residues 298–318; it reads PYATCLAYVNSCLNPFLYAFF. Residues 319 to 363 lie on the Cytoplasmic side of the membrane; that stretch reads DLRFRSQCFFFFGFKKVLQGHLSNTSSSLSAQTQKSEIHSLATKV.

Belongs to the G-protein coupled receptor 1 family. Expressed in all blood vessels including the posterior cardinal vein, intersomitic veins and the vitelline vein network.

The protein resides in the cell membrane. G protein-coupled receptor for peptide hormones apelin (apln) and apelin receptor early endogenous ligand (apela), that plays a role in the regulation of normal cardiovascular function and fluid homeostasis. When acting as apelin receptor, activates both G(i) protein pathway that inhibits adenylate cyclase activity, and the beta-arrestin pathway that promotes internalization of the receptor. Also functions as mechanoreceptor that is activated by pathological stimuli in a G-protein-independent fashion to induce beta-arrestin signaling, hence eliciting cardiac hypertrophy. However, the presence of apelin ligand blunts cardiac hypertrophic induction from APLNR/APJ on response to pathological stimuli. Plays a key role in early development such as gastrulation, blood vessels formation and heart morphogenesis by acting as a receptor for apela hormone, promoting endoderm and mesendoderm cell migration and regulating the migration of cells fated to become myocardial progenitors, respectively. Promotes angioblast migration toward the embryonic midline, i.e. the position of the future vessel formation, during vasculogenesis. May promote sinus venosus (SV)-derived endothelial cells migration into the developing heart to promote coronary blood vessel development. Required for cardiovascular development, particularly for intersomitic vein angiogenesis by acting as a receptor for apln hormone. Also plays a role in various processes in adults such as regulation of blood vessel formation, blood pressure, heart contractility, and heart failure. Acts upstream of the i/o type of G-alpha proteins in the differentiation of endothelium, erythroid cells, myeloid cells and cardiomyocytes. The protein is Apelin receptor B (aplnr-b) of Xenopus laevis (African clawed frog).